The following is a 552-amino-acid chain: Putative transport protein HS_1470 (552 aa).

Helical transmembrane passes span 4 to 24 (IAITICILALVAVIGLWIGHW), 28 to 48 (GVGLGIGGVLFGGIIVAHFMN), 67 to 87 (LILFVYTIGIQVGPGFFASLL), 95 to 115 (GLATLIVVLGAVSVFVLYKVV), and 157 to 177 (MAYAMAYPFGICGILLSMWLI). 2 RCK C-terminal domains span residues 190–275 (KQFQ…VIGE) and 277–360 (IDMP…IIGN). Transmembrane regions (helical) follow at residues 370–390 (MLPVFIGIGLGVLLGSIPFYI), 402–424 (AGGPLVVALILARIGSVGKLYWF), 438–458 (IVLFLAVVGLKSGGGFVDTLV), 463–483 (LEWMGYGMFITFIPLMITGII), 495–515 (LCGLLAGSMTDPPALAFANAI), and 529–549 (VYPLSMFLRIMSPQLLAILLW).

It belongs to the AAE transporter (TC 2.A.81) family. YidE subfamily.

The protein resides in the cell membrane. The protein is Putative transport protein HS_1470 of Histophilus somni (strain 129Pt) (Haemophilus somnus).